The chain runs to 353 residues: Mitogen-activated protein kinase mpkB (353 aa).

Residues 21–309 form the Protein kinase domain; sequence YEIQDVIGEG…VEEALRHPYL (289 aa). Residues 27-35 and Lys-50 contribute to the ATP site; that span reads IGEGAYGVV. The Proton acceptor role is filled by Asp-145.

This sequence belongs to the protein kinase superfamily. Ser/Thr protein kinase family. MAP kinase subfamily. Requires Mg(2+) as cofactor.

It localises to the nucleus. The catalysed reaction is L-seryl-[protein] + ATP = O-phospho-L-seryl-[protein] + ADP + H(+). It catalyses the reaction L-threonyl-[protein] + ATP = O-phospho-L-threonyl-[protein] + ADP + H(+). Its activity is regulated as follows. Activated by threonine and tyrosine phosphorylation. In terms of biological role, mitogen-activated protein kinase (MAPK) that plays a role in conidiation and regulation of secondary metabolite biosynthesis. Acts as a repressor of dihydroxynaphthalene (DHN)-melanin production. This Aspergillus fumigatus (strain CBS 144.89 / FGSC A1163 / CEA10) (Neosartorya fumigata) protein is Mitogen-activated protein kinase mpkB.